The chain runs to 549 residues: Chaperonin GroEL (549 aa).

Residues 29 to 32 (TLGP), Lys50, 86 to 90 (DGTTT), Gly413, 479 to 481 (NAA), and Asp496 contribute to the ATP site. Positions 522–549 (VSDKPEKPQQGGQGGGGMGGGDMGGMDF) are disordered. A compositionally biased stretch (gly residues) spans 532–549 (GGQGGGGMGGGDMGGMDF).

The protein belongs to the chaperonin (HSP60) family. Forms a cylinder of 14 subunits composed of two heptameric rings stacked back-to-back. Interacts with the co-chaperonin GroES.

Its subcellular location is the cytoplasm. The enzyme catalyses ATP + H2O + a folded polypeptide = ADP + phosphate + an unfolded polypeptide.. Functionally, together with its co-chaperonin GroES, plays an essential role in assisting protein folding. The GroEL-GroES system forms a nano-cage that allows encapsulation of the non-native substrate proteins and provides a physical environment optimized to promote and accelerate protein folding. This Deinococcus deserti (strain DSM 17065 / CIP 109153 / LMG 22923 / VCD115) protein is Chaperonin GroEL.